We begin with the raw amino-acid sequence, 627 residues long: Glycerophosphodiester phosphodiesterase domain-containing protein 4 (627 aa).

Topologically, residues 1 to 17 are cytoplasmic; sequence MLLFLWIETSNEYFNFD. Residues 18–38 form a helical membrane-spanning segment; it reads WVIFLGTGYWFYWSIFILSLA. G39 is a topological domain (extracellular). Residues 40–60 form a helical membrane-spanning segment; the sequence is ILTAYSSLLLLLGLLLLWEGI. Topologically, residues 61–69 are cytoplasmic; that stretch reads ELYLHLCHK. Residues 70–90 form a helical membrane-spanning segment; the sequence is ILILLVILPCVILMFIICKFW. Over 91–107 the chain is Extracellular; it reads KERWLVAGLSLQIFAPY. Residues 108-128 traverse the membrane as a helical segment; the sequence is VHLVSITVMVILFWPVAIYVA. At 129 to 162 the chain is on the cytoplasmic side; that stretch reads RLEREVRMRRYRMTHSEKKRLKKCNVIARLRGLQ. Residues 163–183 form a helical membrane-spanning segment; that stretch reads VAVGLPFLLIFLSLCLMPLGI. Over 184 to 468 the chain is Extracellular; sequence YSPCIQEKEN…PHFFMTPKFY (285 aa). Residues 198-457 form the GP-PDE domain; that stretch reads PTLFGHRGAP…DNIGLLSQLN (260 aa). A divalent metal cation contacts are provided by E230, D232, and H245. N-linked (GlcNAc...) asparagine glycosylation is found at N308 and N397. A helical transmembrane segment spans residues 469-489; it reads MFIWLLVDIISVLFIVAIFCF. Over 490–627 the chain is Cytoplasmic; that stretch reads HWRRETIKEK…TMPSVEVPYP (138 aa).

This sequence belongs to the glycerophosphoryl diester phosphodiesterase family.

Its subcellular location is the membrane. The chain is Glycerophosphodiester phosphodiesterase domain-containing protein 4 (GDPD4) from Macaca fascicularis (Crab-eating macaque).